The following is a 447-amino-acid chain: ATP-dependent protease ATPase subunit HslU (447 aa).

ATP is bound by residues isoleucine 17, 59-64 (GVGKTE), aspartate 256, glutamate 321, and arginine 393.

It belongs to the ClpX chaperone family. HslU subfamily. A double ring-shaped homohexamer of HslV is capped on each side by a ring-shaped HslU homohexamer. The assembly of the HslU/HslV complex is dependent on binding of ATP.

The protein resides in the cytoplasm. Functionally, ATPase subunit of a proteasome-like degradation complex; this subunit has chaperone activity. The binding of ATP and its subsequent hydrolysis by HslU are essential for unfolding of protein substrates subsequently hydrolyzed by HslV. HslU recognizes the N-terminal part of its protein substrates and unfolds these before they are guided to HslV for hydrolysis. The chain is ATP-dependent protease ATPase subunit HslU from Pseudomonas putida (strain W619).